The sequence spans 389 residues: Leucine aminopeptidase 1 (389 aa).

Positions 1-18 (MKSAALLLPLYTAAFAAA) are cleaved as a signal peptide. Residues 19–89 (AFHHEHAQAV…TLNHRINAES (71 aa)) constitute a propeptide that is removed on maturation. 3 N-linked (GlcNAc...) asparagine glycosylation sites follow: Asn-99, Asn-146, and Asn-156. Zn(2+)-binding residues include His-188, Asp-207, Glu-246, and Asp-273. Cys-322 and Cys-326 form a disulfide bridge. Residue His-355 coordinates Zn(2+).

This sequence belongs to the peptidase M28 family. M28E subfamily. In terms of assembly, monomer. It depends on Zn(2+) as a cofactor.

The protein resides in the secreted. In terms of biological role, extracellular aminopeptidase that allows assimilation of proteinaceous substrates. In Pyrenophora tritici-repentis (strain Pt-1C-BFP) (Wheat tan spot fungus), this protein is Leucine aminopeptidase 1 (lap1).